The chain runs to 1387 residues: Magnesium-chelatase subunit ChlH, chloroplastic (1387 aa).

A chloroplast-targeting transit peptide spans 1–50 (MSSLVSTPFTTATGVQKKLGAPVPLHSFLLSRRQPAAGAGRGRAAAAAIR).

It belongs to the Mg-chelatase subunit H family. The magnesium chelatase complex is a heterotrimer consisting of subunits CHLI, CHLD and CHLH.

Its subcellular location is the plastid. It localises to the chloroplast stroma. The protein localises to the chloroplast membrane. The enzyme catalyses protoporphyrin IX + Mg(2+) + ATP + H2O = Mg-protoporphyrin IX + ADP + phosphate + 3 H(+). It participates in porphyrin-containing compound metabolism; chlorophyll biosynthesis. In terms of biological role, involved in chlorophyll biosynthesis. Catalyzes the insertion of magnesium ion into protoporphyrin IX to yield Mg-protoporphyrin IX. The reaction takes place in two steps, with an ATP-dependent activation followed by an ATP-dependent chelation step. May be involved in the plastid-to-nucleus retrograde signaling. In Oryza sativa subsp. indica (Rice), this protein is Magnesium-chelatase subunit ChlH, chloroplastic (CHLH).